The chain runs to 509 residues: Maturase K (509 aa).

The protein belongs to the intron maturase 2 family. MatK subfamily.

The protein resides in the plastid. The protein localises to the chloroplast. Functionally, usually encoded in the trnK tRNA gene intron. Probably assists in splicing its own and other chloroplast group II introns. This Drimys granadensis protein is Maturase K.